We begin with the raw amino-acid sequence, 586 residues long: A-type ATP synthase subunit A (586 aa).

232–239 (GPFGSGKT) contacts ATP.

The protein belongs to the ATPase alpha/beta chains family. Has multiple subunits with at least A(3), B(3), C, D, E, F, H, I and proteolipid K(x).

Its subcellular location is the cell membrane. It catalyses the reaction ATP + H2O + 4 H(+)(in) = ADP + phosphate + 5 H(+)(out). Functionally, component of the A-type ATP synthase that produces ATP from ADP in the presence of a proton gradient across the membrane. The A chain is the catalytic subunit. In Methanococcus vannielii (strain ATCC 35089 / DSM 1224 / JCM 13029 / OCM 148 / SB), this protein is A-type ATP synthase subunit A.